The primary structure comprises 263 residues: Aquaglyceroporin (263 aa).

Residues 1–22 (MDQFVFSGGSEGGGELGGDRER) are disordered. The next 6 membrane-spanning stretches (helical) occupy residues 41–61 (KYFCEFFAALVIVSAVAFGLA), 64–84 (GGAQAAPLSITSTIFALITLF), 113–133 (LCYVAAQLIGGTVGAFIGYGI), 157–177 (VIPTMVMIYAVLVLVFGYGVM), 180–200 (LTVPFVVGACVLAGAFAGATM), and 222–242 (VAALLVTLFGPFLGAMFAFLG).

Belongs to the MIP/aquaporin (TC 1.A.8) family. Multimer.

It is found in the vacuole membrane. The enzyme catalyses H2O(in) = H2O(out). It carries out the reaction glycerol(in) = glycerol(out). The catalysed reaction is urea(in) = urea(out). Functionally, mediates water and glycerol transport across cell membranes. Permeable to selected sugar alcohols of up to five carbons and urea. Permeable to methylamine/methylammonium. The protein is Aquaglyceroporin of Toxoplasma gondii (strain ATCC 50611 / Me49).